The following is a 495-amino-acid chain: Angiopoietin-2 (495 aa).

Positions 1-18 (MWQIVFFTLSCDLVRAAA) are cleaved as a signal peptide. N-linked (GlcNAc...) asparagine glycans are attached at residues N88, N118, N132, N150, N239, and N303. The stretch at 165–247 (STNKLEKQIL…VNNSVLQKQQ (83 aa)) forms a coiled coil. Positions 274 to 494 (KEEQIIYRDC…GTTMMIRPAD (221 aa)) constitute a Fibrinogen C-terminal domain. The cysteines at positions 283 and 312 are disulfide-linked. Ca(2+) contacts are provided by D428, D430, C432, and C434. 2 disulfides stabilise this stretch: C432–C434 and C436–C449.

Interacts with TEK/TIE2, competing for the same binding site as ANGPT1. Interacts with ITGA5. Interacts with SVEP1/polydom. Interacts with THBD; this interaction significantly inhibits the generation of activated PC and TAFIa/CPB2 by the thrombin/thrombomodulin complex.

Its subcellular location is the secreted. In terms of biological role, binds to TEK/TIE2, competing for the ANGPT1 binding site, and modulating ANGPT1 signaling. Can induce tyrosine phosphorylation of TEK/TIE2 in the absence of ANGPT1. In the absence of angiogenic inducers, such as VEGF, ANGPT2-mediated loosening of cell-matrix contacts may induce endothelial cell apoptosis with consequent vascular regression. In concert with VEGF, it may facilitate endothelial cell migration and proliferation, thus serving as a permissive angiogenic signal. Involved in the regulation of lymphangiogenesis. This Canis lupus familiaris (Dog) protein is Angiopoietin-2 (ANGPT2).